A 526-amino-acid chain; its full sequence is Probable lipid II flippase MurJ (526 aa).

The next 14 membrane-spanning stretches (helical) occupy residues 35–55, 58–78, 96–116, 137–157, 160–180, 190–210, 235–255, 281–301, 313–333, 362–382, 391–411, 415–435, 459–479, and 489–509; these read LMGT…PNLF, LFAE…HYSM, AIFT…ILGA, MFPY…LHSI, FVPS…SMYF, IAAA…QLIF, IIAL…NDLV, LLGI…SFHV, LITA…FVLF, WHSV…AFYA, IAGT…FIPL, GIAF…WMFL, LFSV…AYFF, and GVPL…LLLL.

The protein belongs to the MurJ/MviN family.

The protein resides in the cell inner membrane. It functions in the pathway cell wall biogenesis; peptidoglycan biosynthesis. Its function is as follows. Involved in peptidoglycan biosynthesis. Transports lipid-linked peptidoglycan precursors from the inner to the outer leaflet of the cytoplasmic membrane. This is Probable lipid II flippase MurJ from Treponema pallidum (strain Nichols).